The sequence spans 102 residues: P antigen family member 4 (102 aa).

The segment covering 1 to 10 (MSARVRSRSR) has biased composition (basic residues). The segment at 1–102 (MSARVRSRSR…KTKEAGDGQP (102 aa)) is disordered. Ser7 is modified (phosphoserine; by CLK2). Residue Ser9 is modified to Phosphoserine; by HIPK1 and CLK2. A compositionally biased stretch (basic and acidic residues) spans 45 to 85 (GQEREGTPPIEERKVEGDCQEMDLEKTRSERGDGSDVKEKT). Residue Thr51 is modified to Phosphothreonine; by HIPK1 and CLK2. Position 71 is a phosphothreonine; by CLK2 (Thr71). 2 positions are modified to phosphoserine; by CLK2: Ser73 and Ser79. 2 positions are modified to phosphothreonine; by CLK2: Thr85 and Thr94.

This sequence belongs to the GAGE family. In terms of assembly, interacts with JUN. Post-translationally, HIPK1-mediated phosphorylation at Thr-51 leads to the compaction of its intrinsically disordered conformation and is critical for its ability to potentiate the transcriptional activator activity of JUN inspite of a reduced interaction with JUN. CLK2-mediated phosphorylation at multiple Ser and Thr residues attenuates its ability to potentiate JUN transcriptional activator activity. As to expression, expressed at basal lvels in the adult normal prostate gland but is highly up-regulated in the fetal prostate and prostate cancer cells. Preferentially expressed in normal male and female reproductive tissues, testis, fallopian tube, uterus, and placenta, as well as in testicular cancer, uterine cancer, cervical cancer and kidney cancer.

It localises to the cytoplasm. The protein resides in the nucleus. The protein localises to the mitochondrion. In terms of biological role, intrinsically disordered protein that potentiates the transcriptional activator activity of JUN. Protects cells from stress-induced apoptosis by inhibiting reactive oxygen species (ROS) production and via regulation of the MAPK signaling pathway. In Homo sapiens (Human), this protein is P antigen family member 4 (PAGE4).